Here is a 572-residue protein sequence, read N- to C-terminus: Enolase 4 (572 aa).

The segment at 181–204 is disordered; sequence IEPVPSPVTSPALGKKKGSGKGKK. The span at 194-204 shows a compositional bias: basic residues; the sequence is GKKKGSGKGKK. E288 contacts substrate. Residue K468 is the Proton acceptor of the active site. Substrate is bound at residue K519.

Belongs to the enolase family.

It carries out the reaction (2R)-2-phosphoglycerate = phosphoenolpyruvate + H2O. It functions in the pathway carbohydrate degradation; glycolysis; pyruvate from D-glyceraldehyde 3-phosphate: step 4/5. The chain is Enolase 4 (eno4) from Xenopus laevis (African clawed frog).